Here is a 284-residue protein sequence, read N- to C-terminus: MKKLTTLLLASTLLIAACGNDDSKKDDSKTSKKDDGVKAELKQATKAYDKYTDEQLNEFLKGTEKFVKAIENNDMAQAKALYPKVRMYYERSEPVAEAFGDLDPKIDARLADMKEEKKEKEWSGYHKIEKALYEDKKIDDVTKKDAQQLLKDAKELHAKADTLDITPKLMLQGSVDLLNEVATSKITGEEEIYSHTDLYDFKANIEGAQKIYDLFKPILEKKDKKLSDDIQMNFDKVNQLLDKYKDNNGGYESFEKVSKKDRKAFADAVNALGEPLSKMAVITE.

The signal sequence occupies residues 1-17; sequence MKKLTTLLLASTLLIAA. C18 carries the N-palmitoyl cysteine lipid modification. The S-diacylglycerol cysteine moiety is linked to residue C18.

It belongs to the EfeM/EfeO family.

It is found in the cell membrane. The protein is Efem/EfeO family lipoprotein of Staphylococcus aureus (strain MSSA476).